The primary structure comprises 1343 residues: MVYSYSEKKRIRKDFGKRPRVLDIPYLLSIQLDSFKKFTDQDPTGERGFEAAFRSVFPIKSFSGNSELQYVSYKLGEPVFDVKECQIRGVTYSAPLRVKLRMVLYDREAAPGTVKDIKEQEVYMGDIPLMTDNGTFVINGTERVIVSQLHRSPGVFFDHDRGKTHSSGKVLYNARIIPYRGSWLDFEFDPKDALFVRIDRRRKLAASIILRALDYSTQDILDLFFDRVNFKIKKDSLVMDLVADRLRGETASYDIKDAEGTVLVEKGRRITARHIRQLEKTNTTELEVPVEYIAGKISGQDYIDPDTGEVLVSANADISLEDLAKLSMAGIKEISTLYINELDNGAYISDTLRIDSTTNRLEALVEIYRMMRPGEPPTKDAAEALFNNLFFSEERYDLSKVGRMKFNRRLSIDDDEGTGILSKEDIVAVMKNIIAIRNGFDEVDDIDHLGNRRIRSVGEMAENQFRVGLVRVERAVRERLSLGDLNELMPQDLINAKPISAAVKEFFGSSQLSQFMDQNNPLSEVTHKRRISALGPGGLTRERAGFEVRDVHPTHYGRLCPIETPEGPNIGLINSLSTFARTNNYGFLETPYRKVIDGVVTDEVDYLSAIEEGRYVIAQAIVQLDENGRMMDELIACRHKGDSTFMGAADIQYMDVSPQQIISVAASLIPFLEHDDANRALMGANMQRQAVPTLKADKPLVGTGIERTLAVDSGVVVAAKRGGYVDYVDASRIVVKVNEAELTPGEAGIDIYNLTKYTRSNQNTCINQRPCCSVGDPIVRGDVLADGPSTDLGDLALGQNMRIAFMPWNGYNFEDSILISERVAQEDRFTTIHIQELSCIARDTKLGSEEITADIPNVGESALSKLDESGIVYIGAEVKGGDILVGKVTPKGETQLTPEEKLLRAIFGEKASDVKDSSLRVPNSVKGTIIDVQVFTRDGVEKDKRAVEIEEMHIAQAKKDLTEEFQILEDGVIGRARNLLIGAGFDEAQLAAIPRSQLLVQTIDDEVKQTELEQLAEQAEELKADFDKKFEIKRRKITQGDDLAPGVLKIVKVYLAVKRTIQPGDKMAGRHGNKGVISKICPVEDMPYDEKGNPVDIVLNPLGVPSRMNIGQVLEVHMGAAAKGIGNRITEMLEEQRELAELRGYIKQVYELGDEVIQKVDIDSFTDDEILRLAKNLKGGVPIATPAFDGAKEKEIKQMLELAGLPQSGQLTLIDGRTGNEFERKVTVGYMYMLKLNHLVDDKMHARSTGSYSLVTQQPLGGKAQFGGQRFGEMEVWALEAYGAAYTLQEMLTVKSDDVNGRTQMYKNIVDGNHQMQPGMPESFNVLLKEIRSLGINIELDTK.

This sequence belongs to the RNA polymerase beta chain family. The RNAP catalytic core consists of 2 alpha, 1 beta, 1 beta' and 1 omega subunit. When a sigma factor is associated with the core the holoenzyme is formed, which can initiate transcription.

It carries out the reaction RNA(n) + a ribonucleoside 5'-triphosphate = RNA(n+1) + diphosphate. DNA-dependent RNA polymerase catalyzes the transcription of DNA into RNA using the four ribonucleoside triphosphates as substrates. The chain is DNA-directed RNA polymerase subunit beta from Shewanella pealeana (strain ATCC 700345 / ANG-SQ1).